The primary structure comprises 682 residues: Iron-phytosiderophore transporter yellow stripe 1 (682 aa).

The segment at 1–36 (MDLARRGGAAGADDEGEIERHEPAPEDMESDPAAAR) is disordered. The next 15 helical transmembrane spans lie at 56 to 76 (GVVA…KIAL), 79 to 99 (GLVP…LRGW), 124 to 144 (CAVA…LLGL), 167 to 187 (GFGW…LSLI), 236 to 256 (LSFV…CGFV), 288 to 308 (LVNI…WPLI), 334 to 354 (FLCI…VFGV), 396 to 416 (FPAW…AVII), 428 to 448 (VIVA…GTGL), 460 to 480 (IALF…AGLA), 514 to 534 (VAQF…FLLF), 549 to 569 (APYG…FSVL), 574 to 594 (LALS…RDVL), 612 to 632 (FLVG…VFVW), and 640 to 660 (AVFM…IWTF).

This sequence belongs to the YSL (TC 2.A.67.2) family. In terms of tissue distribution, expressed in roots of young maize seedlings. Not detected in leaves of iron-sufficient plants, but accumulates in roots and leaves of iron-deficient plants.

Its subcellular location is the membrane. In terms of biological role, involved in Fe(3+) uptake. Acts as a proton-coupled symporter for phytosiderophore- and nicotianamine-chelated metals. Capable of transporting either Fe(2+)-nicotianamine or Fe(3+)-phytosiderophore. May transport iron, zinc, nickel, copper and, at a lower rate, manganese and cadmium. The protein is Iron-phytosiderophore transporter yellow stripe 1 (YS1) of Zea mays (Maize).